A 215-amino-acid polypeptide reads, in one-letter code: Adenylate kinase (215 aa).

ATP is bound at residue 10–15 (GAGKGT). The NMP stretch occupies residues 30-59 (STGDMFRAAIKEGTELGKQAKALMDQGKLV). Residues Thr-31, Arg-36, 57–59 (KLV), 85–88 (GFPR), and Gln-92 contribute to the AMP site. The tract at residues 122 to 159 (GRRVHQPSGRTYHIIYNPPKVAGQDDITGEELITRADD) is LID. ATP contacts are provided by residues Arg-123 and 132 to 133 (TY). Residues Arg-156 and Arg-167 each contribute to the AMP site. Residue Lys-200 coordinates ATP.

This sequence belongs to the adenylate kinase family. As to quaternary structure, monomer.

Its subcellular location is the cytoplasm. The enzyme catalyses AMP + ATP = 2 ADP. It participates in purine metabolism; AMP biosynthesis via salvage pathway; AMP from ADP: step 1/1. Its function is as follows. Catalyzes the reversible transfer of the terminal phosphate group between ATP and AMP. Plays an important role in cellular energy homeostasis and in adenine nucleotide metabolism. The protein is Adenylate kinase of Haemophilus ducreyi (strain 35000HP / ATCC 700724).